Reading from the N-terminus, the 241-residue chain is Large ribosomal subunit protein uL2 (241 aa).

A compositionally biased stretch (basic residues) spans 1–12; sequence MGKRLISQRRGR. 2 disordered regions span residues 1–21 and 200–241; these read MGKRLISQRRGRGTPTYRSAS and AVDH…GKRR.

It belongs to the universal ribosomal protein uL2 family. In terms of assembly, part of the 50S ribosomal subunit. Forms a bridge to the 30S subunit in the 70S ribosome.

Functionally, one of the primary rRNA binding proteins. Required for association of the 30S and 50S subunits to form the 70S ribosome, for tRNA binding and peptide bond formation. It has been suggested to have peptidyltransferase activity; this is somewhat controversial. Makes several contacts with the 16S rRNA in the 70S ribosome. The protein is Large ribosomal subunit protein uL2 of Methanothermobacter thermautotrophicus (strain ATCC 29096 / DSM 1053 / JCM 10044 / NBRC 100330 / Delta H) (Methanobacterium thermoautotrophicum).